Consider the following 344-residue polypeptide: Ribosomal RNA small subunit methyltransferase H 2 (344 aa).

S-adenosyl-L-methionine contacts are provided by residues 78–80, aspartate 98, phenylalanine 131, aspartate 145, and glutamine 152; that span reads GGH.

The protein belongs to the methyltransferase superfamily. RsmH family.

It is found in the cytoplasm. It catalyses the reaction cytidine(1402) in 16S rRNA + S-adenosyl-L-methionine = N(4)-methylcytidine(1402) in 16S rRNA + S-adenosyl-L-homocysteine + H(+). Its function is as follows. Specifically methylates the N4 position of cytidine in position 1402 (C1402) of 16S rRNA. This Acholeplasma laidlawii (strain PG-8A) protein is Ribosomal RNA small subunit methyltransferase H 2.